The following is a 456-amino-acid chain: tRNA-2-methylthio-N(6)-dimethylallyladenosine synthase (456 aa).

The region spanning 1–116 (MTYFFETYGC…FESIFQEIEQ (116 aa)) is the MTTase N-terminal domain. 6 residues coordinate [4Fe-4S] cluster: Cys10, Cys46, Cys79, Cys162, Cys166, and Cys169. Residues 148–384 (SEGSFQSFIP…IALQMSTTLK (237 aa)) enclose the Radical SAM core domain. Residues 387-452 (RARVGKTLPV…GRTLRAHLVQ (66 aa)) enclose the TRAM domain.

This sequence belongs to the methylthiotransferase family. MiaB subfamily. Monomer. The cofactor is [4Fe-4S] cluster.

It localises to the cytoplasm. It carries out the reaction N(6)-dimethylallyladenosine(37) in tRNA + (sulfur carrier)-SH + AH2 + 2 S-adenosyl-L-methionine = 2-methylsulfanyl-N(6)-dimethylallyladenosine(37) in tRNA + (sulfur carrier)-H + 5'-deoxyadenosine + L-methionine + A + S-adenosyl-L-homocysteine + 2 H(+). Its function is as follows. Catalyzes the methylthiolation of N6-(dimethylallyl)adenosine (i(6)A), leading to the formation of 2-methylthio-N6-(dimethylallyl)adenosine (ms(2)i(6)A) at position 37 in tRNAs that read codons beginning with uridine. The polypeptide is tRNA-2-methylthio-N(6)-dimethylallyladenosine synthase (Treponema pallidum (strain Nichols)).